Consider the following 460-residue polypeptide: UDP-N-acetylmuramoylalanine--D-glutamate ligase (460 aa).

123-129 (GTNGKTT) lines the ATP pocket.

This sequence belongs to the MurCDEF family.

It localises to the cytoplasm. It catalyses the reaction UDP-N-acetyl-alpha-D-muramoyl-L-alanine + D-glutamate + ATP = UDP-N-acetyl-alpha-D-muramoyl-L-alanyl-D-glutamate + ADP + phosphate + H(+). It functions in the pathway cell wall biogenesis; peptidoglycan biosynthesis. Cell wall formation. Catalyzes the addition of glutamate to the nucleotide precursor UDP-N-acetylmuramoyl-L-alanine (UMA). The protein is UDP-N-acetylmuramoylalanine--D-glutamate ligase (murD) of Enterococcus hirae.